The sequence spans 78 residues: Large ribosomal subunit protein bL28 (78 aa).

A disordered region spans residues 1 to 22 (MAKVCQVTGKRPVTGHNVSHAK).

Belongs to the bacterial ribosomal protein bL28 family.

This is Large ribosomal subunit protein bL28 from Teredinibacter turnerae (strain ATCC 39867 / T7901).